The primary structure comprises 21 residues: Peptide PGLa-R4 (21 aa).

A Leucine amide modification is found at leucine 21.

As to expression, expressed by the skin glands.

Its subcellular location is the secreted. Antimicrobial peptide. The polypeptide is Peptide PGLa-R4 (Xenopus ruwenzoriensis (Uganda clawed frog)).